The primary structure comprises 96 residues: Integration host factor subunit beta (96 aa).

Belongs to the bacterial histone-like protein family. In terms of assembly, heterodimer of an alpha and a beta chain.

Functionally, this protein is one of the two subunits of integration host factor, a specific DNA-binding protein that functions in genetic recombination as well as in transcriptional and translational control. This Methylocella silvestris (strain DSM 15510 / CIP 108128 / LMG 27833 / NCIMB 13906 / BL2) protein is Integration host factor subunit beta.